We begin with the raw amino-acid sequence, 42 residues long: Photosystem I reaction center subunit IX (42 aa).

The helical transmembrane segment at 7–27 threads the bilayer; that stretch reads YLSTAPVLSALWFAILAGLLI.

This sequence belongs to the PsaJ family.

The protein resides in the plastid. It is found in the chloroplast thylakoid membrane. In terms of biological role, may help in the organization of the PsaE and PsaF subunits. The sequence is that of Photosystem I reaction center subunit IX from Chlorokybus atmophyticus (Soil alga).